The chain runs to 85 residues: Acyl carrier protein ScoB (85 aa).

Residues 1 to 77 (MPAPLTLDGF…QWWQLLSARQ (77 aa)) form the Carrier domain. Serine 38 is subject to O-(pantetheine 4'-phosphoryl)serine.

It belongs to the acyl carrier protein (ACP) family. Pantetheine 4'-phosphate is required as a cofactor.

It participates in lipid metabolism; fatty acid metabolism. Its function is as follows. Acyl-carrier protein (ACP) involved in the biosynthesis of a unique class of isonitrile lipopeptides (INLPs). Is the dedicated ACP for the loading of activated acyl groups catalyzed by ScoC. The chain is Acyl carrier protein ScoB from Streptomyces coeruleorubidus.